Reading from the N-terminus, the 45-residue chain is AKAKRSPRKKKAAVKKSSKSKAKKPKSPKKKKAAKKPAKKAAKKK.

The disordered stretch occupies residues 1 to 45; sequence AKAKRSPRKKKAAVKKSSKSKAKKPKSPKKKKAAKKPAKKAAKKK.

The protein resides in the nucleus. Its subcellular location is the chromosome. Functionally, involved in nuclear basic protein transition: histones are replaced by spermatid specific proteins which are themselves replaced by protamines in late spermatids. The polypeptide is Sperm-specific protein Phi-3 (Mytilus californianus (California mussel)).